The following is a 449-amino-acid chain: Probable cysteine proteinase 224L (449 aa).

Active-site residues include C99, H292, and N322. Residues 429-449 traverse the membrane as a helical segment; it reads DTQIVFIFFLSVVILFIFIIL.

It belongs to the peptidase C1 family.

It is found in the membrane. Its function is as follows. Probable cysteine protease. The protein is Probable cysteine proteinase 224L of Acheta domesticus (House cricket).